The chain runs to 546 residues: Chaperonin GroEL (546 aa).

ATP is bound by residues 30–33 (TLGP), Lys-51, 87–91 (DGTTT), Gly-415, 479–481 (NAA), and Asp-495.

This sequence belongs to the chaperonin (HSP60) family. As to quaternary structure, forms a cylinder of 14 subunits composed of two heptameric rings stacked back-to-back. Interacts with the co-chaperonin GroES.

It is found in the cytoplasm. It carries out the reaction ATP + H2O + a folded polypeptide = ADP + phosphate + an unfolded polypeptide.. Its function is as follows. Together with its co-chaperonin GroES, plays an essential role in assisting protein folding. The GroEL-GroES system forms a nano-cage that allows encapsulation of the non-native substrate proteins and provides a physical environment optimized to promote and accelerate protein folding. The polypeptide is Chaperonin GroEL (Stutzerimonas stutzeri (strain A1501) (Pseudomonas stutzeri)).